Reading from the N-terminus, the 256-residue chain is Probable ribosomal RNA small subunit methyltransferase A (256 aa).

The S-adenosyl-L-methionine site is built by H8, L10, G34, E55, D83, and N98.

It belongs to the class I-like SAM-binding methyltransferase superfamily. rRNA adenine N(6)-methyltransferase family. RsmA subfamily.

The protein localises to the cytoplasm. Specifically dimethylates two adjacent adenosines in the loop of a conserved hairpin near the 3'-end of 16S rRNA in the 30S particle. May play a critical role in biogenesis of 30S subunits. The polypeptide is Probable ribosomal RNA small subunit methyltransferase A (Methanospirillum hungatei JF-1 (strain ATCC 27890 / DSM 864 / NBRC 100397 / JF-1)).